Reading from the N-terminus, the 797-residue chain is Protocadherin beta-9 (797 aa).

An N-terminal signal peptide occupies residues 1-26 (MKTRGFSFPRQRQVLFLFLFWGVSLA). Residues 27–690 (GSGFGRYSVT…AQADSLTVYL (664 aa)) are Extracellular-facing. Cadherin domains are found at residues 35–133 (VTEE…SPVF), 138–242 (MVLK…APQF), 247–347 (YETQ…PPEL), 352–451 (LSNS…APAF), and 456–561 (YTLF…SPFV). Residue Asn-169 is glycosylated (N-linked (GlcNAc...) asparagine). An N-linked (GlcNAc...) asparagine glycan is attached at Asn-418. Asn-567 is a glycosylation site (N-linked (GlcNAc...) asparagine). Residues 568–671 (GSAPCTELVP…LVDGFSQPYL (104 aa)) form the Cadherin 6 domain. Residues 691–711 (VVALASVSSLFLLSVLLFVAV) form a helical membrane-spanning segment. The Cytoplasmic segment spans residues 712 to 797 (RLCRRSRAAS…TLHNSFGFNY (86 aa)).

It is found in the cell membrane. Its function is as follows. Potential calcium-dependent cell-adhesion protein. May be involved in the establishment and maintenance of specific neuronal connections in the brain. The protein is Protocadherin beta-9 (PCDHB9) of Pan troglodytes (Chimpanzee).